The chain runs to 297 residues: Homoserine kinase (297 aa).

ATP is bound at residue 82 to 92 (PVSRGLGSSAA).

It belongs to the GHMP kinase family. Homoserine kinase subfamily.

It localises to the cytoplasm. It carries out the reaction L-homoserine + ATP = O-phospho-L-homoserine + ADP + H(+). It functions in the pathway amino-acid biosynthesis; L-threonine biosynthesis; L-threonine from L-aspartate: step 4/5. Its function is as follows. Catalyzes the ATP-dependent phosphorylation of L-homoserine to L-homoserine phosphate. This is Homoserine kinase from Clostridium botulinum (strain 657 / Type Ba4).